The following is a 25-amino-acid chain: Small ribosomal subunit protein eS32 eS32z/eS32y/eS32x/eS32w/eS32v (25 aa).

The tract at residues 1–25 (MRAKWKKKRMRRLKRKRRKMRQRSK) is disordered.

Belongs to the eukaryotic ribosomal protein eS32 family. In terms of assembly, component of the small ribosomal subunit (SSU).

This chain is Small ribosomal subunit protein eS32 eS32z/eS32y/eS32x/eS32w/eS32v (RPL41A), found in Arabidopsis thaliana (Mouse-ear cress).